The sequence spans 393 residues: Putative odorant receptor 69a, isoform A (393 aa).

The Cytoplasmic segment spans residues 1–39 (MQLHDHMKYIDLGCKMACIPRYQWKGRPTERQFYASEQR). Residues 40-60 (IVFLLGTICQIFQITGVLIYW) form a helical membrane-spanning segment. Over 61 to 76 (YCNGRLATETGTFVAQ) the chain is Extracellular. Residues 77–97 (LSEMCSSFCLTFVGFCNVYAI) traverse the membrane as a helical segment. At 98–139 (STNRNQIETLLEELHQIYPRYRKNHYRCQHYFDMAMTIMRIE) the chain is on the cytoplasmic side. The helical transmembrane segment at 140-160 (FLFYMILYVYYNSAPLWVLLW) threads the bilayer. Residues 161–189 (EHLHEEYDLSFKTQTNTWFPWKVHGSALG) are Extracellular-facing. Residues 190–210 (FGMAVLSITVGSFVGVGFSIV) form a helical membrane-spanning segment. Residues 211–269 (TQNLICLLTFQLKLHYDGISSQLVSLDCRRPGAHKELSILIAHHSRILQLGDQVNDIMN) lie on the Cytoplasmic side of the membrane. A helical membrane pass occupies residues 270–290 (FVFGSSLVGATIAICMSSVSI). Residues 291–304 (MLLDLASAFKYASG) lie on the Extracellular side of the membrane. A helical transmembrane segment spans residues 305 to 325 (LVAFVLYNFVICYMGTEVTLA). Over 326–365 (SGKVLPAAFYNNWYEGDLVYRRMLLILMMRATKPYMWKTY) the chain is Cytoplasmic. The helical transmembrane segment at 366–386 (KLAPVSITTYMATLKFSYQMF) threads the bilayer. Residues 387–393 (TCVRSLK) are Extracellular-facing.

This sequence belongs to the insect chemoreceptor superfamily. Heteromeric odorant receptor channel (TC 1.A.69) family. Or49a subfamily. In terms of assembly, interacts with Orco. Complexes exist early in the endomembrane system in olfactory sensory neurons (OSNs), coupling these complexes to the conserved ciliary trafficking pathway. In terms of tissue distribution, expressed in olfactory sensory neurons in the antenna.

Its subcellular location is the cell membrane. Functionally, odorant receptor which mediates acceptance or avoidance behavior, depending on its substrates. The odorant receptor repertoire encodes a large collection of odor stimuli that vary widely in identity, intensity, and duration. May form a complex with Orco to form odorant-sensing units, providing sensitive and prolonged odorant signaling and calcium permeability. In Drosophila melanogaster (Fruit fly), this protein is Putative odorant receptor 69a, isoform A (Or69a).